Here is a 600-residue protein sequence, read N- to C-terminus: Elongation factor 4 (600 aa).

Residues 5 to 187 form the tr-type G domain; that stretch reads KYIRNFSIIA…AIVNKLPPPK (183 aa). Residues 17-22 and 134-137 each bind GTP; these read DHGKST and NKID.

This sequence belongs to the TRAFAC class translation factor GTPase superfamily. Classic translation factor GTPase family. LepA subfamily.

Its subcellular location is the cell inner membrane. The enzyme catalyses GTP + H2O = GDP + phosphate + H(+). Its function is as follows. Required for accurate and efficient protein synthesis under certain stress conditions. May act as a fidelity factor of the translation reaction, by catalyzing a one-codon backward translocation of tRNAs on improperly translocated ribosomes. Back-translocation proceeds from a post-translocation (POST) complex to a pre-translocation (PRE) complex, thus giving elongation factor G a second chance to translocate the tRNAs correctly. Binds to ribosomes in a GTP-dependent manner. The polypeptide is Elongation factor 4 (Rickettsia felis (strain ATCC VR-1525 / URRWXCal2) (Rickettsia azadi)).